We begin with the raw amino-acid sequence, 252 residues long: Spermatogenesis-associated protein 9 (252 aa).

Residues 145–167 (TSIMYASYAALIYLAVCVNAVLA) traverse the membrane as a helical segment. Residues 208–221 (KAKPYRSLPEKPDN) are compositionally biased toward basic and acidic residues. The segment at 208–235 (KAKPYRSLPEKPDNLLDQPKPPANKQSN) is disordered.

It is found in the membrane. Functionally, may play at role in testicular development/spermatogenesis and may be an important factor in male infertility. The protein is Spermatogenesis-associated protein 9 (Spata9) of Mus musculus (Mouse).